We begin with the raw amino-acid sequence, 229 residues long: MSDFNKDDYLNDLPDADELANGQASPDADGADAPSDTGEQLKDDMLKDAAAEQSAGEQASEESAKAAAEATADAASDGDAEGSSLTPLGQAKKEAAEYLEALQRERAEFINYRNRTKKDMDRARQQGIIDVLTAMLPGLDDIDRIREHGEMDDSFKAVAAKIDKTFEKFGVEKFGLKGEDFDPTKHEAILHKPDPEASKATVDTVVEAGYRIGDRVIRAARVVVASPQN.

The tract at residues 1–89 (MSDFNKDDYL…AEGSSLTPLG (89 aa)) is disordered. Positions 24–36 (ASPDADGADAPSD) are enriched in low complexity. Positions 39-50 (EQLKDDMLKDAA) are enriched in basic and acidic residues. Low complexity predominate over residues 65-84 (KAAAEATADAASDGDAEGSS).

It belongs to the GrpE family. In terms of assembly, homodimer.

Its subcellular location is the cytoplasm. Participates actively in the response to hyperosmotic and heat shock by preventing the aggregation of stress-denatured proteins, in association with DnaK and GrpE. It is the nucleotide exchange factor for DnaK and may function as a thermosensor. Unfolded proteins bind initially to DnaJ; upon interaction with the DnaJ-bound protein, DnaK hydrolyzes its bound ATP, resulting in the formation of a stable complex. GrpE releases ADP from DnaK; ATP binding to DnaK triggers the release of the substrate protein, thus completing the reaction cycle. Several rounds of ATP-dependent interactions between DnaJ, DnaK and GrpE are required for fully efficient folding. The polypeptide is Protein GrpE (Bifidobacterium animalis subsp. lactis (strain AD011)).